An 84-amino-acid polypeptide reads, in one-letter code: U8-theraphotoxin-Hhn1g (84 aa).

A signal peptide spans 1–21; the sequence is MKVVLLVCLVWMMAMMELVSC. Cystine bridges form between C23-C35, C29-C44, C34-C67, C54-C75, and C69-C81.

The protein belongs to the AVIT (prokineticin) family. Expressed by the venom gland.

The protein localises to the secreted. This chain is U8-theraphotoxin-Hhn1g, found in Cyriopagopus hainanus (Chinese bird spider).